Consider the following 883-residue polypeptide: Phosphoenolpyruvate carboxylase (883 aa).

Catalysis depends on residues histidine 138 and lysine 546.

The protein belongs to the PEPCase type 1 family. Homotetramer. Mg(2+) serves as cofactor.

The enzyme catalyses oxaloacetate + phosphate = phosphoenolpyruvate + hydrogencarbonate. The enzyme has distinct binding sites for each of the allosteric effectors such as acetyl-CoA, fructose 1,6-bisphosphate, guanosine 3'-diphosphate 5'-diphosphate, long chain fatty acids, and L-aspartate. Forms oxaloacetate, a four-carbon dicarboxylic acid source for the tricarboxylic acid cycle. This chain is Phosphoenolpyruvate carboxylase, found in Escherichia coli O157:H7.